Consider the following 384-residue polypeptide: Ribosomal RNA large subunit methyltransferase G (384 aa).

This sequence belongs to the methyltransferase superfamily. RlmG family.

It localises to the cytoplasm. The enzyme catalyses guanosine(1835) in 23S rRNA + S-adenosyl-L-methionine = N(2)-methylguanosine(1835) in 23S rRNA + S-adenosyl-L-homocysteine + H(+). In terms of biological role, specifically methylates the guanine in position 1835 (m2G1835) of 23S rRNA. This chain is Ribosomal RNA large subunit methyltransferase G, found in Pseudoalteromonas atlantica (strain T6c / ATCC BAA-1087).